A 123-amino-acid chain; its full sequence is WAP four-disulfide core domain protein 5 (123 aa).

The N-terminal stretch at Met1–Gly24 is a signal peptide. 2 WAP domains span residues Lys27–Val74 and Ser75–Val121. 8 disulfides stabilise this stretch: Cys34–Cys62, Cys41–Cys66, Cys49–Cys61, Cys55–Cys70, Cys81–Cys109, Cys88–Cys113, Cys96–Cys108, and Cys102–Cys117.

The protein localises to the secreted. Its function is as follows. Putative acid-stable proteinase inhibitor. The polypeptide is WAP four-disulfide core domain protein 5 (WFDC5) (Otolemur garnettii (Small-eared galago)).